We begin with the raw amino-acid sequence, 692 residues long: Elongation factor G (692 aa).

Residues Asn8–Thr283 form the tr-type G domain. GTP is bound by residues Ala17 to Thr24, Asp81 to His85, and Asn135 to Asp138.

This sequence belongs to the TRAFAC class translation factor GTPase superfamily. Classic translation factor GTPase family. EF-G/EF-2 subfamily.

It localises to the cytoplasm. Functionally, catalyzes the GTP-dependent ribosomal translocation step during translation elongation. During this step, the ribosome changes from the pre-translocational (PRE) to the post-translocational (POST) state as the newly formed A-site-bound peptidyl-tRNA and P-site-bound deacylated tRNA move to the P and E sites, respectively. Catalyzes the coordinated movement of the two tRNA molecules, the mRNA and conformational changes in the ribosome. The protein is Elongation factor G (fusA) of Helicobacter pylori (strain J99 / ATCC 700824) (Campylobacter pylori J99).